The sequence spans 296 residues: Protoheme IX farnesyltransferase 2 (296 aa).

Transmembrane regions (helical) follow at residues 7 to 27 (LLVA…GGYF), 36 to 56 (PMLL…GCVL), 83 to 103 (LKAA…LLWW), 108 to 128 (LTTA…SLWF), 134 to 154 (YGTL…YCAV), 163 to 183 (ASLL…IAIF), 207 to 227 (IHIV…CLGG), 229 to 249 (AGYG…AIAL), and 265 to 285 (FAFS…DFQV).

It belongs to the UbiA prenyltransferase family. Protoheme IX farnesyltransferase subfamily.

The protein localises to the cell inner membrane. It catalyses the reaction heme b + (2E,6E)-farnesyl diphosphate + H2O = Fe(II)-heme o + diphosphate. It functions in the pathway porphyrin-containing compound metabolism; heme O biosynthesis; heme O from protoheme: step 1/1. In terms of biological role, converts heme B (protoheme IX) to heme O by substitution of the vinyl group on carbon 2 of heme B porphyrin ring with a hydroxyethyl farnesyl side group. In Pseudomonas aeruginosa (strain UCBPP-PA14), this protein is Protoheme IX farnesyltransferase 2.